Consider the following 144-residue polypeptide: HTH-type transcriptional regulator MntR (144 aa).

Positions 1-63 (MTTPSMEDYI…YEKYRGLILT (63 aa)) constitute an HTH dtxR-type domain. The Mn(2+) site is built by Asp8, Glu11, His77, Glu99, Glu102, and His103.

This sequence belongs to the DtxR/MntR family. In terms of assembly, homodimer.

It localises to the cytoplasm. Its activity is regulated as follows. DNA binding is strongly activated by Mn(2+). In terms of biological role, central regulator of manganese homeostasis. This is HTH-type transcriptional regulator MntR from Bacillus pumilus (strain SAFR-032).